Consider the following 418-residue polypeptide: Type II methyltransferase M.MspI (418 aa).

Positions 105-404 constitute an SAM-dependent MTase C5-type domain; sequence FKFIDLFSGI…EQISLALKTV (300 aa). Residue Cys-174 is part of the active site.

This sequence belongs to the class I-like SAM-binding methyltransferase superfamily. C5-methyltransferase family.

It catalyses the reaction a 2'-deoxycytidine in DNA + S-adenosyl-L-methionine = a 5-methyl-2'-deoxycytidine in DNA + S-adenosyl-L-homocysteine + H(+). Functionally, a methylase, recognizes the double-stranded sequence 5'-CCGG-3', methylates C-1 on both strands, and protects the DNA from cleavage by the MspI endonuclease. The polypeptide is Type II methyltransferase M.MspI (mspIM) (Moraxella sp).